The sequence spans 150 residues: Small ribosomal subunit protein eS19 (150 aa).

It belongs to the eukaryotic ribosomal protein eS19 family. As to quaternary structure, part of the 30S ribosomal subunit.

Functionally, may be involved in maturation of the 30S ribosomal subunit. This is Small ribosomal subunit protein eS19 from Thermococcus kodakarensis (strain ATCC BAA-918 / JCM 12380 / KOD1) (Pyrococcus kodakaraensis (strain KOD1)).